A 162-amino-acid chain; its full sequence is NADH-quinone oxidoreductase subunit I (162 aa).

4Fe-4S ferredoxin-type domains are found at residues 54-83 (RRYE…IESE) and 93-122 (TRYD…ETQI). [4Fe-4S] cluster is bound by residues Cys63, Cys66, Cys69, Cys73, Cys102, Cys105, Cys108, and Cys112.

Belongs to the complex I 23 kDa subunit family. NDH-1 is composed of 14 different subunits. Subunits NuoA, H, J, K, L, M, N constitute the membrane sector of the complex. Requires [4Fe-4S] cluster as cofactor.

The protein localises to the cell inner membrane. It catalyses the reaction a quinone + NADH + 5 H(+)(in) = a quinol + NAD(+) + 4 H(+)(out). In terms of biological role, NDH-1 shuttles electrons from NADH, via FMN and iron-sulfur (Fe-S) centers, to quinones in the respiratory chain. The immediate electron acceptor for the enzyme in this species is believed to be ubiquinone. Couples the redox reaction to proton translocation (for every two electrons transferred, four hydrogen ions are translocated across the cytoplasmic membrane), and thus conserves the redox energy in a proton gradient. The chain is NADH-quinone oxidoreductase subunit I from Burkholderia ambifaria (strain MC40-6).